The following is a 94-amino-acid chain: UPF0298 protein SEQ_1830 (94 aa).

It belongs to the UPF0298 family.

Its subcellular location is the cytoplasm. This chain is UPF0298 protein SEQ_1830, found in Streptococcus equi subsp. equi (strain 4047).